A 338-amino-acid polypeptide reads, in one-letter code: Anthranilate phosphoribosyltransferase (338 aa).

5-phospho-alpha-D-ribose 1-diphosphate contacts are provided by residues Gly-81, Gly-84–Asp-85, Thr-89, Asn-91–Thr-94, Lys-109–Ser-117, and Ser-121. Anthranilate is bound at residue Gly-81. Ser-93 provides a ligand contact to Mg(2+). Asn-112 is a binding site for anthranilate. Arg-167 lines the anthranilate pocket. The Mg(2+) site is built by Asp-225 and Glu-226.

Belongs to the anthranilate phosphoribosyltransferase family. As to quaternary structure, homodimer. Mg(2+) serves as cofactor.

The enzyme catalyses N-(5-phospho-beta-D-ribosyl)anthranilate + diphosphate = 5-phospho-alpha-D-ribose 1-diphosphate + anthranilate. It participates in amino-acid biosynthesis; L-tryptophan biosynthesis; L-tryptophan from chorismate: step 2/5. In terms of biological role, catalyzes the transfer of the phosphoribosyl group of 5-phosphorylribose-1-pyrophosphate (PRPP) to anthranilate to yield N-(5'-phosphoribosyl)-anthranilate (PRA). The protein is Anthranilate phosphoribosyltransferase of Methanoculleus marisnigri (strain ATCC 35101 / DSM 1498 / JR1).